We begin with the raw amino-acid sequence, 419 residues long: Protein phosphatase methylesterase 1 (419 aa).

Basic residues predominate over residues 1–12 (MSQLHRGMHKKP). Positions 1–75 (MSQLHRGMHK…KSAASPTVPA (75 aa)) are disordered. The span at 32–52 (TETEETVECTEEEEEQDETDG) shows a compositional bias: acidic residues. Residues Ser230, Asp256, and His383 contribute to the active site.

Belongs to the AB hydrolase superfamily.

The enzyme catalyses [phosphatase 2A protein]-C-terminal L-leucine methyl ester + H2O = [phosphatase 2A protein]-C-terminal L-leucine + methanol + H(+). Its function is as follows. Demethylates proteins that have been reversibly carboxymethylated. Demethylates the phosphatase PP2A catalytic subunit. The polypeptide is Protein phosphatase methylesterase 1 (PPE1) (Yarrowia lipolytica (strain CLIB 122 / E 150) (Yeast)).